The primary structure comprises 562 residues: Sesquiterpene synthase (562 aa).

Residues aspartate 315, aspartate 319, and glutamate 467 each coordinate Mg(2+). The DDXXD motif signature appears at 315–319; that stretch reads DDIYD.

Belongs to the terpene synthase family. Tpsa subfamily. The cofactor is Mg(2+). Mn(2+) serves as cofactor.

Functionally, catalyzes the formation of beta-elemol, guaiol and bulnesol. This is Sesquiterpene synthase from Santalum spicatum (Australian sandalwood).